The sequence spans 351 residues: Cytochrome c biogenesis protein CcsA (351 aa).

Transmembrane regions (helical) follow at residues 12–32 (NISF…AAFP), 37–57 (LSIL…TLLG), 68–88 (ISNL…IHLI), 97–117 (LVGV…ALTL), 143–163 (MMLS…FLII), 259–279 (IIGL…VWAN), 294–314 (WALI…TKGW), and 320–340 (AILA…VNLL).

It belongs to the CcmF/CycK/Ccl1/NrfE/CcsA family. As to quaternary structure, may interact with ccs1.

The protein localises to the cellular thylakoid membrane. In terms of biological role, required during biogenesis of c-type cytochromes (cytochrome c6 and cytochrome f) at the step of heme attachment. The protein is Cytochrome c biogenesis protein CcsA of Trichodesmium erythraeum (strain IMS101).